The following is a 547-amino-acid chain: Chaperonin GroEL (547 aa).

Residues 30–33, Lys-51, 87–91, Gly-415, 479–481, and Asp-495 contribute to the ATP site; these read TLGP, DGTTT, and NAA.

Belongs to the chaperonin (HSP60) family. In terms of assembly, forms a cylinder of 14 subunits composed of two heptameric rings stacked back-to-back. Interacts with the co-chaperonin GroES.

The protein localises to the cytoplasm. It catalyses the reaction ATP + H2O + a folded polypeptide = ADP + phosphate + an unfolded polypeptide.. In terms of biological role, together with its co-chaperonin GroES, plays an essential role in assisting protein folding. The GroEL-GroES system forms a nano-cage that allows encapsulation of the non-native substrate proteins and provides a physical environment optimized to promote and accelerate protein folding. This chain is Chaperonin GroEL, found in Enterobacter sp. (strain 638).